The following is a 167-amino-acid chain: Protein-export protein SecB (167 aa).

This sequence belongs to the SecB family. Homotetramer, a dimer of dimers. One homotetramer interacts with 1 SecA dimer.

The protein resides in the cytoplasm. One of the proteins required for the normal export of preproteins out of the cell cytoplasm. It is a molecular chaperone that binds to a subset of precursor proteins, maintaining them in a translocation-competent state. It also specifically binds to its receptor SecA. This chain is Protein-export protein SecB, found in Wolbachia pipientis subsp. Culex pipiens (strain wPip).